The sequence spans 314 residues: Altered inheritance of mitochondria protein 6 homolog ARB_06966 (314 aa).

Positions 1-21 are cleaved as a signal peptide; that stretch reads MKSSILASAAILAASLEPVAA. Residues asparagine 91 and asparagine 184 are each glycosylated (N-linked (GlcNAc...) asparagine).

It belongs to the AIM6 family.

It localises to the secreted. This chain is Altered inheritance of mitochondria protein 6 homolog ARB_06966, found in Arthroderma benhamiae (strain ATCC MYA-4681 / CBS 112371) (Trichophyton mentagrophytes).